A 2193-amino-acid chain; its full sequence is Genome polyprotein (2193 aa).

The N-myristoyl glycine; by host moiety is linked to residue Gly-2. Over 2-1503 (GAQVSTQKTG…HVSRAFICLQ (1502 aa)) the chain is Cytoplasmic. The tract at residues 567–583 (ELQSDVREAVEGAIGRV) is amphipathic alpha-helix. Residues His-880 and Asp-898 each act as for protease 2A activity in the active site. Cys-915 and Cys-917 together coordinate Zn(2+). Cys-969 functions as the For protease 2A activity in the catalytic mechanism. 2 residues coordinate Zn(2+): Cys-975 and His-977. A membrane-binding region spans residues 1109-1181 (NNRWLKKFTE…EQSAPSQGDQ (73 aa)). The oligomerization stretch occupies residues 1109-1247 (NNRWLKKFTE…SPGAGKSVAT (139 aa)). Residues 1130-1134 (AIKIQ) form an RNA-binding region. The region spanning 1213-1369 (EKKMSNYIQF…SMYSQNGKIN (157 aa)) is the SF3 helicase domain. 3 residues coordinate Zn(2+): Cys-1377, Cys-1389, and Cys-1394. The C4-type; degenerate zinc-finger motif lies at 1377–1394 (CDEECCPVNFKKCCPLVC). Positions 1421–1428 (EYNHRHSV) are RNA-binding. Residues 1432–1437 (LEALFQ) form an oligomerization region. Residues 1504 to 1519 (ALTTFVSVAGIIYIIY) lie within the membrane without spanning it. Over 1520–2193 (KLFAGFQGAY…TLRRKWLDSF (674 aa)) the chain is Cytoplasmic. An O-(5'-phospho-RNA)-tyrosine modification is found at Tyr-1529. The Peptidase C3 domain occupies 1549–1727 (GPAFEFAVAM…FSAALLKHYF (179 aa)). Active-site for protease 3C activity residues include His-1588, Glu-1619, and Cys-1695. Residues 1958–2074 (GHLIAFDYSG…SYPWPIDASL (117 aa)) form the RdRp catalytic domain. Asp-1964 and Asp-2060 together coordinate Mg(2+).

It belongs to the picornaviruses polyprotein family. In terms of assembly, interacts with capsid protein VP1 and capsid protein VP3 to form heterotrimeric protomers. Interacts with capsid protein VP0, and capsid protein VP3 to form heterotrimeric protomers. Five protomers subsequently associate to form pentamers which serve as building blocks for the capsid. Interacts with capsid protein VP2, capsid protein VP3 and capsid protein VP4 following cleavage of capsid protein VP0. As to quaternary structure, interacts with capsid protein VP1 and capsid protein VP3 in the mature capsid. In terms of assembly, interacts with capsid protein VP0 and capsid protein VP1 to form heterotrimeric protomers. Five protomers subsequently associate to form pentamers which serve as building blocks for the capsid. Interacts with capsid protein VP4 in the mature capsid. Interacts with protein 2C; this interaction may be important for virion morphogenesis. Interacts with capsid protein VP1 and capsid protein VP3. As to quaternary structure, homodimer. In terms of assembly, homohexamer; forms a hexameric ring structure with 6-fold symmetry characteristic of AAA+ ATPases. Interacts (via N-terminus) with host RTN3 (via reticulon domain); this interaction is important for viral replication. Interacts with capsid protein VP3; this interaction may be important for virion morphogenesis. Interacts with protein 3CD. As to quaternary structure, homodimer. Interacts with host GBF1. Interacts (via GOLD domain) with host ACBD3 (via GOLD domain); this interaction allows the formation of a viral protein 3A/ACBD3 heterotetramer with a 2:2 stoichiometry, which will stimulate the recruitment of host PI4KB in order to synthesize PI4P at the viral RNA replication sites. In terms of assembly, interacts with RNA-directed RNA polymerase. Interacts with protein 3AB and with RNA-directed RNA polymerase. As to quaternary structure, interacts with Viral protein genome-linked and with protein 3CD. Mg(2+) serves as cofactor. In terms of processing, specific enzymatic cleavages in vivo by the viral proteases yield processing intermediates and the mature proteins. Post-translationally, myristoylation is required for the formation of pentamers during virus assembly. Further assembly of 12 pentamers and a molecule of genomic RNA generates the provirion. During virion maturation, immature virions are rendered infectious following cleavage of VP0 into VP4 and VP2. This maturation seems to be an autocatalytic event triggered by the presence of RNA in the capsid and it is followed by a conformational change infectious virion. In terms of processing, myristoylation is required during RNA encapsidation and formation of the mature virus particle. Post-translationally, VPg is uridylylated by the polymerase into VPg-pUpU. This acts as a nucleotide-peptide primer for the genomic RNA replication.

Its subcellular location is the virion. The protein resides in the host cytoplasm. It localises to the host cytoplasmic vesicle membrane. The protein localises to the host nucleus. The enzyme catalyses a ribonucleoside 5'-triphosphate + H2O = a ribonucleoside 5'-diphosphate + phosphate + H(+). It carries out the reaction Selective cleavage of Tyr-|-Gly bond in the picornavirus polyprotein.. It catalyses the reaction RNA(n) + a ribonucleoside 5'-triphosphate = RNA(n+1) + diphosphate. The catalysed reaction is Selective cleavage of Gln-|-Gly bond in the poliovirus polyprotein. In other picornavirus reactions Glu may be substituted for Gln, and Ser or Thr for Gly.. Its activity is regulated as follows. Replication or transcription is subject to high level of random mutations by the nucleotide analog ribavirin. In terms of biological role, forms an icosahedral capsid of pseudo T=3 symmetry with capsid proteins VP2 and VP3. The capsid is 300 Angstroms in diameter, composed of 60 copies of each capsid protein and enclosing the viral positive strand RNA genome. Capsid protein VP1 mainly forms the vertices of the capsid. Capsid protein VP1 interacts with host cell receptor to provide virion attachment to target host cells. This attachment induces virion internalization. Tyrosine kinases are probably involved in the entry process. After binding to its receptor, the capsid undergoes conformational changes. Capsid protein VP1 N-terminus (that contains an amphipathic alpha-helix) and capsid protein VP4 are externalized. Together, they shape a pore in the host membrane through which viral genome is translocated to host cell cytoplasm. Its function is as follows. Forms an icosahedral capsid of pseudo T=3 symmetry with capsid proteins VP2 and VP3. The capsid is 300 Angstroms in diameter, composed of 60 copies of each capsid protein and enclosing the viral positive strand RNA genome. Lies on the inner surface of the capsid shell. After binding to the host receptor, the capsid undergoes conformational changes. Capsid protein VP4 is released, Capsid protein VP1 N-terminus is externalized, and together, they shape a pore in the host membrane through which the viral genome is translocated into the host cell cytoplasm. Functionally, component of immature procapsids, which is cleaved into capsid proteins VP4 and VP2 after maturation. Allows the capsid to remain inactive before the maturation step. In terms of biological role, cysteine protease that cleaves viral polyprotein and specific host proteins. It is responsible for the autocatalytic cleavage between the P1 and P2 regions, which is the first cleavage occurring in the polyprotein. Also cleaves the host translation initiation factor EIF4G1, in order to shut down the capped cellular mRNA translation. Inhibits the host nucleus-cytoplasm protein and RNA trafficking by cleaving host members of the nuclear pores. Counteracts stress granule formation probably by antagonizing its assembly or promoting its dissassembly. Its function is as follows. Plays an essential role in the virus replication cycle by acting as a viroporin. Creates a pore in the host endoplasmic reticulum and as a consequence releases Ca2+ in the cytoplasm of infected cell. In turn, high levels of cytoplasmic calcium may trigger membrane trafficking and transport of viral ER-associated proteins to viroplasms, sites of viral genome replication. Induces and associates with structural rearrangements of intracellular membranes. Displays RNA-binding, nucleotide binding and NTPase activities. May play a role in virion morphogenesis and viral RNA encapsidation by interacting with the capsid protein VP3. Functionally, localizes the viral replication complex to the surface of membranous vesicles. Together with protein 3CD binds the Cis-Active RNA Element (CRE) which is involved in RNA synthesis initiation. Acts as a cofactor to stimulate the activity of 3D polymerase, maybe through a nucleid acid chaperone activity. In terms of biological role, localizes the viral replication complex to the surface of membranous vesicles. It inhibits host cell endoplasmic reticulum-to-Golgi apparatus transport and causes the disassembly of the Golgi complex, possibly through GBF1 interaction. This would result in depletion of MHC, trail receptors and IFN receptors at the host cell surface. Plays an essential role in viral RNA replication by recruiting ACBD3 and PI4KB at the viral replication sites, thereby allowing the formation of the rearranged membranous structures where viral replication takes place. Its function is as follows. Acts as a primer for viral RNA replication and remains covalently bound to viral genomic RNA. VPg is uridylylated prior to priming replication into VPg-pUpU. The oriI viral genomic sequence may act as a template for this. The VPg-pUpU is then used as primer on the genomic RNA poly(A) by the RNA-dependent RNA polymerase to replicate the viral genome. During genome replication, the VPg-RNA linkage is removed by the host TDP2, thereby accelerating replication. During the late stage of the replication cycle, host TDP2 is excluded from sites of viral RNA synthesis and encapsidation, allowing for the generation of progeny virions. Involved in the viral replication complex and viral polypeptide maturation. It exhibits protease activity with a specificity and catalytic efficiency that is different from protease 3C. Protein 3CD lacks polymerase activity. Protein 3CD binds to the 5'UTR of the viral genome. Functionally, replicates the viral genomic RNA on the surface of intracellular membranes. May form linear arrays of subunits that propagate along a strong head-to-tail interaction called interface-I. Covalently attaches UMP to a tyrosine of VPg, which is used to prime RNA synthesis. The positive stranded RNA genome is first replicated at virus induced membranous vesicles, creating a dsRNA genomic replication form. This dsRNA is then used as template to synthesize positive stranded RNA genomes. ss(+)RNA genomes are either translated, replicated or encapsidated. In terms of biological role, major viral protease that mediates proteolytic processing of the polyprotein. Cleaves host EIF5B, contributing to host translation shutoff. Also cleaves host PABPC1, contributing to host translation shutoff. Cleaves host NLRP1, triggers host N-glycine-mediated degradation of the autoinhibitory NLRP1 N-terminal fragment. The chain is Genome polyprotein from Echovirus 9 (strain Hill).